Consider the following 943-residue polypeptide: Nuclear factor of activated T-cells, cytoplasmic 1 (943 aa).

The tract at residues 22–48 (GRGETLGPAPRAGGTMKSAEEEHYGYA) is disordered. The calcineurin-binding stretch occupies residues 118–123 (PRIEIT). The segment at 126–218 (LGLYHNNNQF…CVSPKTTDPE (93 aa)) is transactivation domain A (TAD-A). The segment at 200-298 (PQTSPWQSPC…GSPRVSVTDD (99 aa)) is disordered. Polar residues predominate over residues 201-214 (QTSPWQSPCVSPKT). A run of 2 repeats spans residues 203–219 (SPWQ…DPEE) and 233–249 (SPRH…VTEE). A 3 X SP repeats region spans residues 203–298 (SPWQSPCVSP…GSPRVSVTDD (96 aa)). Phosphoserine is present on residues serine 233 and serine 237. Polar residues predominate over residues 236-248 (HSPSTSPRASVTE). A Phosphoserine; by PKA modification is found at serine 245. The Nuclear localization signal motif lies at 265–267 (KRK). Residue serine 269 is modified to Phosphoserine; by PKA. Residues 276-288 (PYSPHHSPTPSPH) are compositionally biased toward pro residues. Repeat 3 spans residues 282-298 (SPTPSPHGSPRVSVTDD). Serine 294 is modified (phosphoserine; by PKA). A Nuclear export signal motif is present at residues 310 to 321 (SAIVAAINALTT). The 183-residue stretch at 410–592 (PTLPALDWQL…NPIECSQRSA (183 aa)) folds into the RHD domain. A DNA-binding region spans residues 439–446 (RAHYETEG). A Nuclear localization signal motif is present at residues 682–684 (KRK). Residues 703–943 (TEPTDDYEPA…NDLSSTSTHS (241 aa)) form a transactivation domain B (TAD-B) region. The interval 787-912 (HLGLPQPAGE…SPNLAPIPVT (126 aa)) is disordered. Residues 846–855 (SPSPPLPPAT) show a composition bias toward pro residues. The Nuclear export signal signature appears at 924-933 (YLDDVNEIIR).

Member of the multicomponent NFATC transcription complex that consists of at least two components, a pre-existing cytoplasmic component NFATC2 and an inducible nuclear component NFATC1. Other members such as NFATC4, NFATC3 or members of the activating protein-1 family, MAF, GATA4 and Cbp/p300 can also bind the complex. NFATC proteins bind to DNA as monomers. Interacts with HOMER2 and HOMER3; this interaction may compete with calcineurin/PPP3CA-binding and hence prevent NFATC1 dephosphorylation and activation. Interacts with TLE6/GRG6. In terms of processing, phosphorylated by NFATC-kinase and GSK3B; phosphorylation induces NFATC1 nuclear exit and dephosphorylation by calcineurin promotes nuclear import. Phosphorylation by PKA and DYRK2 negatively modulates nuclear accumulation, and promotes subsequent phosphorylation by GSK3B or casein kinase 1. Expressed in thymus, peripheral leukocytes as T-cells and spleen. Isoforms A are preferentially expressed in effector T-cells (thymus and peripheral leukocytes) whereas isoforms B and isoforms C are preferentially expressed in naive T-cells (spleen). Isoforms B are expressed in naive T-cells after first antigen exposure and isoforms A are expressed in effector T-cells after second antigen exposure. Isoforms IA are widely expressed but not detected in liver nor pancreas, neural expression is strongest in corpus callosum. Isoforms IB are expressed mostly in muscle, cerebellum, placenta and thymus, neural expression in fetal and adult brain, strongest in corpus callosum.

It is found in the cytoplasm. It localises to the nucleus. Functionally, plays a role in the inducible expression of cytokine genes in T-cells, especially in the induction of the IL-2 or IL-4 gene transcription. Also controls gene expression in embryonic cardiac cells. Could regulate not only the activation and proliferation but also the differentiation and programmed death of T-lymphocytes as well as lymphoid and non-lymphoid cells. Required for osteoclastogenesis and regulates many genes important for osteoclast differentiation and function. The protein is Nuclear factor of activated T-cells, cytoplasmic 1 (NFATC1) of Homo sapiens (Human).